Here is a 117-residue protein sequence, read N- to C-terminus: MDWTWRILFLVAAVTDAYSQMQLVQSGAEVKKTGSSVKVSCKASGYTFTYRYLHWVRQAPGQALEWMGWITPFNGNTNYAQKFQDRVTITRDRSMSTAYMELSSLRSEDTAMYYCAR.

A signal peptide spans 1-19; it reads MDWTWRILFLVAAVTDAYS. Positions 20 to 44 are framework-1; that stretch reads QMQLVQSGAEVKKTGSSVKVSCKAS. The Ig-like domain maps to 20-117; the sequence is QMQLVQSGAE…EDTAMYYCAR (98 aa). The cysteines at positions 41 and 115 are disulfide-linked. The interval 45–52 is complementarity-determining-1; sequence GYTFTYRY. The tract at residues 53–69 is framework-2; that stretch reads LHWVRQAPGQALEWMGW. Positions 70 to 77 are complementarity-determining-2; sequence ITPFNGNT. The interval 78-115 is framework-3; the sequence is NYAQKFQDRVTITRDRSMSTAYMELSSLRSEDTAMYYC. The tract at residues 116 to 117 is complementarity-determining-3; it reads AR.

As to quaternary structure, immunoglobulins are composed of two identical heavy chains and two identical light chains; disulfide-linked.

The protein resides in the secreted. Its subcellular location is the cell membrane. In terms of biological role, v region of the variable domain of immunoglobulin heavy chains that participates in the antigen recognition. Immunoglobulins, also known as antibodies, are membrane-bound or secreted glycoproteins produced by B lymphocytes. In the recognition phase of humoral immunity, the membrane-bound immunoglobulins serve as receptors which, upon binding of a specific antigen, trigger the clonal expansion and differentiation of B lymphocytes into immunoglobulins-secreting plasma cells. Secreted immunoglobulins mediate the effector phase of humoral immunity, which results in the elimination of bound antigens. The antigen binding site is formed by the variable domain of one heavy chain, together with that of its associated light chain. Thus, each immunoglobulin has two antigen binding sites with remarkable affinity for a particular antigen. The variable domains are assembled by a process called V-(D)-J rearrangement and can then be subjected to somatic hypermutations which, after exposure to antigen and selection, allow affinity maturation for a particular antigen. The sequence is that of Immunoglobulin heavy variable 1-45 from Homo sapiens (Human).